A 317-amino-acid chain; its full sequence is Melanocyte-stimulating hormone receptor (317 aa).

Over residues 1-20 the composition is skewed to polar residues; that stretch reads MPVQGSQRSLLGAVNSTPTA. The disordered stretch occupies residues 1-23; it reads MPVQGSQRSLLGAVNSTPTATPH. The Extracellular portion of the chain corresponds to 1 to 37; it reads MPVQGSQRSLLGAVNSTPTATPHLRPAANQTGPQCLE. Asparagine 29 carries N-linked (GlcNAc...) asparagine glycosylation. A helical membrane pass occupies residues 38 to 63; sequence VSIPDGLFLCLGLVSLVENTLVVAAI. Over 64-72 the chain is Cytoplasmic; sequence AKNRNLHSP. The helical transmembrane segment at 73–93 threads the bilayer; it reads MYCFICCLALSDLLVSVSSVL. Topologically, residues 94–118 are extracellular; the sequence is ETAVLLLLGAGALAAQATVVQQLGN. A helical membrane pass occupies residues 119–140; it reads VIDVLLCSSMVSSLFFLGAIAM. Residues 141–163 lie on the Cytoplasmic side of the membrane; that stretch reads DRYISIFYALRYHSIVTLARARR. The chain crosses the membrane as a helical span at residues 164–183; the sequence is AIAAIWAASILSSTLFIAYC. Residues 184–191 lie on the Extracellular side of the membrane; sequence DRTAALLC. Residues 192–211 traverse the membrane as a helical segment; it reads LVVFFLAMLVLMAVLYVHML. Residues 212-240 lie on the Cytoplasmic side of the membrane; it reads TQARQHAQGIARLHKRQRPVQQGWGLKGA. Residues 241 to 266 traverse the membrane as a helical segment; that stretch reads ATLTILLGVFFLCWGPFFLHLTLIAV. At 267 to 279 the chain is on the extracellular side; the sequence is CPQHPTCSCIFKN. A helical membrane pass occupies residues 280–300; it reads FRLFLALIVCNAIVDPLIYAF. Topologically, residues 301 to 317 are cytoplasmic; that stretch reads RSQELRKTLKEVLLFFW.

This sequence belongs to the G-protein coupled receptor 1 family. Interacts with MGRN1, but does not undergo MGRN1-mediated ubiquitination; this interaction competes with GNAS-binding and thus inhibits agonist-induced cAMP production. Interacts with OPN3; the interaction results in a decrease in MC1R-mediated cAMP signaling and ultimately a decrease in melanin production in melanocytes.

It is found in the cell membrane. In terms of biological role, receptor for MSH (alpha, beta and gamma) and ACTH. The activity of this receptor is mediated by G proteins which activate adenylate cyclase. Mediates melanogenesis, the production of eumelanin (black/brown) and phaeomelanin (red/yellow), via regulation of cAMP signaling in melanocytes. The chain is Melanocyte-stimulating hormone receptor (MC1R) from Lemur catta (Ring-tailed lemur).